A 372-amino-acid chain; its full sequence is Carbamoyl phosphate synthase small chain (372 aa).

A CPSase region spans residues 1–186 (MTYCKRGTEG…IHQNNSPDII (186 aa)). Residues serine 52, glycine 233, and glycine 235 each coordinate L-glutamine. A Glutamine amidotransferase type-1 domain is found at 185 to 372 (IIVLVDCGIK…KKMVIKDEGN (188 aa)). Cysteine 261 functions as the Nucleophile in the catalytic mechanism. L-glutamine-binding residues include leucine 262, glutamine 265, asparagine 303, glycine 305, and tyrosine 306. Catalysis depends on residues histidine 345 and glutamate 347.

The protein belongs to the CarA family. Composed of two chains; the small (or glutamine) chain promotes the hydrolysis of glutamine to ammonia, which is used by the large (or ammonia) chain to synthesize carbamoyl phosphate. Tetramer of heterodimers (alpha,beta)4.

The enzyme catalyses hydrogencarbonate + L-glutamine + 2 ATP + H2O = carbamoyl phosphate + L-glutamate + 2 ADP + phosphate + 2 H(+). The catalysed reaction is L-glutamine + H2O = L-glutamate + NH4(+). It functions in the pathway amino-acid biosynthesis; L-arginine biosynthesis; carbamoyl phosphate from bicarbonate: step 1/1. Its pathway is pyrimidine metabolism; UMP biosynthesis via de novo pathway; (S)-dihydroorotate from bicarbonate: step 1/3. In terms of biological role, small subunit of the glutamine-dependent carbamoyl phosphate synthetase (CPSase). CPSase catalyzes the formation of carbamoyl phosphate from the ammonia moiety of glutamine, carbonate, and phosphate donated by ATP, constituting the first step of 2 biosynthetic pathways, one leading to arginine and/or urea and the other to pyrimidine nucleotides. The small subunit (glutamine amidotransferase) binds and cleaves glutamine to supply the large subunit with the substrate ammonia. This chain is Carbamoyl phosphate synthase small chain, found in Metallosphaera sedula (strain ATCC 51363 / DSM 5348 / JCM 9185 / NBRC 15509 / TH2).